Reading from the N-terminus, the 185-residue chain is UPF0301 protein Shew_1144 (185 aa).

This sequence belongs to the UPF0301 (AlgH) family.

This Shewanella loihica (strain ATCC BAA-1088 / PV-4) protein is UPF0301 protein Shew_1144.